The primary structure comprises 175 residues: NADH-ubiquinone oxidoreductase chain 6 (175 aa).

Helical transmembrane passes span 1 to 21 (MMTYFVFILSTVFVIGFVGFS), 27 to 47 (VYGGVGLIISGGVGCGIVMNF), 49 to 69 (GSFLGLMVFLIYLGGMMVVFG), 88 to 108 (VVLGAFVSGLFMEMLLVLYVL), and 149 to 169 (YGVWLVVVTGWSLFIAVVVIM).

This sequence belongs to the complex I subunit 6 family. In terms of assembly, core subunit of respiratory chain NADH dehydrogenase (Complex I) which is composed of 45 different subunits.

The protein localises to the mitochondrion inner membrane. It catalyses the reaction a ubiquinone + NADH + 5 H(+)(in) = a ubiquinol + NAD(+) + 4 H(+)(out). Its function is as follows. Core subunit of the mitochondrial membrane respiratory chain NADH dehydrogenase (Complex I) which catalyzes electron transfer from NADH through the respiratory chain, using ubiquinone as an electron acceptor. Essential for the catalytic activity and assembly of complex I. The sequence is that of NADH-ubiquinone oxidoreductase chain 6 (MT-ND6) from Pteropus dasymallus (Ryukyu flying fox).